A 520-amino-acid chain; its full sequence is Nonsense-mediated mRNA decay factor SMG9 (520 aa).

Disordered stretches follow at residues 1–94 (MSES…PAPL) and 107–143 (GKGP…QRPT). At S2 the chain carries N-acetylserine. Phosphoserine occurs at positions 2, 4, 7, 32, and 53. Basic and acidic residues predominate over residues 36–53 (GRERDYIAPWERERRDGS). Residues 78 to 94 (QPPPSTAPAAPPAPAPL) show a composition bias toward pro residues. The span at 112 to 121 (AATGASTPEG) shows a compositional bias: low complexity. Residues 122 to 133 (TAPPPPTAPAPP) show a composition bias toward pro residues. Residue S451 is modified to Phosphoserine.

This sequence belongs to the SMG9 family. Self-associates to form homodimers and forms heterodimers with SMG8; these assembly forms may represent SMG1C intermediate forms. Component of the SMG1C complex composed of SMG1, SMG8 and SMG9. Interacts with DHX34; the interaction is RNA-independent. In terms of processing, phosphorylated by SMG1.

In terms of biological role, involved in nonsense-mediated decay (NMD) of mRNAs containing premature stop codons. Is recruited by release factors to stalled ribosomes together with SMG1 and SMG8 (forming the SMG1C protein kinase complex) and, in the SMG1C complex, is required for the efficient association between SMG1 and SMG8. Plays a role in brain, heart, and eye development. The chain is Nonsense-mediated mRNA decay factor SMG9 from Rattus norvegicus (Rat).